We begin with the raw amino-acid sequence, 160 residues long: uncharacterized protein (160 aa).

The RING-type zinc finger occupies Cys-8–Arg-46.

This is an uncharacterized protein from Caenorhabditis elegans.